Reading from the N-terminus, the 305-residue chain is HPr kinase/phosphorylase (305 aa).

Residues histidine 138 and lysine 159 contribute to the active site. Residue glycine 153 to serine 160 coordinates ATP. Residue serine 160 participates in Mg(2+) binding. The active-site Proton acceptor; for phosphorylation activity. Proton donor; for dephosphorylation activity is aspartate 177. The tract at residues isoleucine 201–aspartate 210 is important for the catalytic mechanism of both phosphorylation and dephosphorylation. Residue glutamate 202 participates in Mg(2+) binding. Arginine 243 is an active-site residue. The segment at proline 264–arginine 269 is important for the catalytic mechanism of dephosphorylation.

The protein belongs to the HPrK/P family. Homohexamer. Mg(2+) serves as cofactor.

The enzyme catalyses [HPr protein]-L-serine + ATP = [HPr protein]-O-phospho-L-serine + ADP + H(+). It catalyses the reaction [HPr protein]-O-phospho-L-serine + phosphate + H(+) = [HPr protein]-L-serine + diphosphate. In terms of biological role, catalyzes the ATP- as well as the pyrophosphate-dependent phosphorylation of a specific serine residue in HPr, a phosphocarrier protein of the phosphoenolpyruvate-dependent sugar phosphotransferase system (PTS). HprK/P also catalyzes the pyrophosphate-producing, inorganic phosphate-dependent dephosphorylation (phosphorolysis) of seryl-phosphorylated HPr (P-Ser-HPr). The two antagonistic activities of HprK/P are regulated by several intracellular metabolites, which change their concentration in response to the absence or presence of rapidly metabolisable carbon sources (glucose, fructose, etc.) in the growth medium. Therefore, by controlling the phosphorylation state of HPr, HPrK/P is a sensor enzyme that plays a major role in the regulation of carbon metabolism and sugar transport: it mediates carbon catabolite repression (CCR), and regulates PTS-catalyzed carbohydrate uptake and inducer exclusion. This Caldanaerobacter subterraneus subsp. tengcongensis (strain DSM 15242 / JCM 11007 / NBRC 100824 / MB4) (Thermoanaerobacter tengcongensis) protein is HPr kinase/phosphorylase.